Here is a 349-residue protein sequence, read N- to C-terminus: Meiotic recombination protein DMC1 homolog (349 aa).

138 to 145 is a binding site for ATP; sequence GEFRSGKT. Position 240 (Arg-240) interacts with dsDNA. SsDNA is bound by residues Arg-240, Phe-243, Arg-246, Arg-252, and Arg-320. Residues Arg-246 and Arg-252 each contribute to the dsDNA site.

Belongs to the RecA family. DMC1 subfamily. Double stacked ring-shaped homooctamer.

It localises to the nucleus. Functionally, may participate in meiotic recombination. This is Meiotic recombination protein DMC1 homolog (LIM15) from Lilium longiflorum (Trumpet lily).